We begin with the raw amino-acid sequence, 361 residues long: 3-dehydroquinate synthase (361 aa).

Residues Asp71–Lys76, Gly105–Asp109, Thr129–Thr130, Lys142, Lys151, and Cys169–Thr172 each bind NAD(+). The Zn(2+) site is built by Glu184, His247, and His264.

This sequence belongs to the sugar phosphate cyclases superfamily. Dehydroquinate synthase family. Co(2+) serves as cofactor. Zn(2+) is required as a cofactor. Requires NAD(+) as cofactor.

Its subcellular location is the cytoplasm. The catalysed reaction is 7-phospho-2-dehydro-3-deoxy-D-arabino-heptonate = 3-dehydroquinate + phosphate. It participates in metabolic intermediate biosynthesis; chorismate biosynthesis; chorismate from D-erythrose 4-phosphate and phosphoenolpyruvate: step 2/7. Catalyzes the conversion of 3-deoxy-D-arabino-heptulosonate 7-phosphate (DAHP) to dehydroquinate (DHQ). The polypeptide is 3-dehydroquinate synthase (Sodalis glossinidius (strain morsitans)).